We begin with the raw amino-acid sequence, 350 residues long: Homeobox-leucine zipper protein HOX5 (350 aa).

Positions 83–142 (APEKKRRLTAEQVQMLERSFEEENKLEPERKTELARRLGMAPRQVAVWFQNRRARWKTKQ) form a DNA-binding region, homeobox. The interval 141–185 (KQLEHDFDRLKAAYDALAADHHALLSDNDRLRAQVISLTEKLQDK) is leucine-zipper. A disordered region spans residues 180–254 (EKLQDKETSP…TNDDGDGGGA (75 aa)). Low complexity predominate over residues 188-198 (SPSSATITTAA).

It belongs to the HD-ZIP homeobox family. Class I subfamily. Homodimer. May form a heterodimer with HOX4. As to expression, expressed in seedlings, roots, leaves, nodes, internodes, flowers and embryo.

Its subcellular location is the nucleus. Functionally, probable transcription activator that binds to the DNA sequence 5'-CAAT[AT]ATTG-3'. The polypeptide is Homeobox-leucine zipper protein HOX5 (HOX5) (Oryza sativa subsp. indica (Rice)).